The following is a 304-amino-acid chain: Non-specific ribonucleoside hydrolase RihC (304 aa).

Histidine 233 is a catalytic residue.

The protein belongs to the IUNH family. RihC subfamily.

Functionally, hydrolyzes both purine and pyrimidine ribonucleosides with a broad-substrate specificity. This Escherichia coli O7:K1 (strain IAI39 / ExPEC) protein is Non-specific ribonucleoside hydrolase RihC.